The following is an 87-amino-acid chain: Small ribosomal subunit protein bS16 (87 aa).

It belongs to the bacterial ribosomal protein bS16 family.

This is Small ribosomal subunit protein bS16 from Variovorax paradoxus (strain S110).